We begin with the raw amino-acid sequence, 412 residues long: L-threonine:uridine-5'-aldehyde transaldolase (412 aa).

Lys-229 carries the post-translational modification N6-(pyridoxal phosphate)lysine.

Belongs to the SHMT family. The cofactor is pyridoxal 5'-phosphate.

The catalysed reaction is uridine-5'-aldehyde + L-threonine = (5'S,6'S)-C-glycyluridine + acetaldehyde. It participates in antibiotic biosynthesis. Its function is as follows. Transaldolase involved in the biosynthesis of the capuramycin-type nucleoside antibiotic A-102395. Catalyzes the condensation of L-threonine and uridine-5'-aldehyde to form 5'-C-glycyluridine (GlyU). In Amycolatopsis sp, this protein is L-threonine:uridine-5'-aldehyde transaldolase.